The chain runs to 1130 residues: DNA-directed RNA polymerase I subunit rpa2 (1130 aa).

A C4-type zinc finger spans residues 1070-1096; it reads CKLCGSTLTIYSKKDYSNQTVSECKSC.

The protein belongs to the RNA polymerase beta chain family. In terms of assembly, component of the RNA polymerase I (Pol I) complex consisting of 14 subunits.

It is found in the nucleus. The protein resides in the nucleolus. It carries out the reaction RNA(n) + a ribonucleoside 5'-triphosphate = RNA(n+1) + diphosphate. In terms of biological role, DNA-dependent RNA polymerase catalyzes the transcription of DNA into RNA using the four ribonucleoside triphosphates as substrates. Second largest core component of RNA polymerase I which synthesizes ribosomal RNA precursors. Proposed to contribute to the polymerase catalytic activity and forms the polymerase active center together with the largest subunit. Pol I is composed of mobile elements and RPA2 is part of the core element with the central large cleft and probably a clamp element that moves to open and close the cleft. This is DNA-directed RNA polymerase I subunit rpa2 (polr1b) from Dictyostelium discoideum (Social amoeba).